The following is a 454-amino-acid chain: Septin-10 (454 aa).

Positions 63-329 constitute a Septin-type G domain; the sequence is QGFCFNILCV…ELYRRCKLEE (267 aa). A G1 motif region spans residues 73 to 80; that stretch reads GETGIGKS. GTP contacts are provided by residues 73-80, Gly128, 209-217, Gly263, and Arg278; these read GETGIGKS and KADTVSKTE. The tract at residues 125–128 is G3 motif; it reads NTVG. The interval 208–211 is G4 motif; the sequence is AKAD.

This sequence belongs to the TRAFAC class TrmE-Era-EngA-EngB-Septin-like GTPase superfamily. Septin GTPase family. As to quaternary structure, septins polymerize into heterooligomeric protein complexes that form filaments, and can associate with cellular membranes, actin filaments and microtubules. GTPase activity is required for filament formation. Interacts with ADGB. Proteolytically cleaved in vitro in a calmodulin-dependent manner. Widely expressed. Abundantly expressed in heart and kidney, placenta, skeletal muscles, liver and lung, as well as various tumor cell lines.

Its subcellular location is the cytoplasm. The protein localises to the cytoskeleton. It is found in the cell projection. It localises to the cilium. The protein resides in the flagellum. Filament-forming cytoskeletal GTPase. May play a role in cytokinesis (Potential). This Homo sapiens (Human) protein is Septin-10.